The sequence spans 359 residues: DNA replication and repair protein RecF (359 aa).

30-37 (GPNGSGKT) is a binding site for ATP.

The protein belongs to the RecF family.

The protein resides in the cytoplasm. Its function is as follows. The RecF protein is involved in DNA metabolism; it is required for DNA replication and normal SOS inducibility. RecF binds preferentially to single-stranded, linear DNA. It also seems to bind ATP. The polypeptide is DNA replication and repair protein RecF (Vibrio vulnificus (strain YJ016)).